The sequence spans 326 residues: tRNA-dihydrouridine(20/20a) synthase (326 aa).

Residues 11–13 (PML) and Gln-63 contribute to the FMN site. Cys-93 functions as the Proton donor in the catalytic mechanism. Residues Lys-132, His-165, 205–207 (NGG), and 227–228 (GR) contribute to the FMN site.

Belongs to the Dus family. DusA subfamily. Requires FMN as cofactor.

It catalyses the reaction 5,6-dihydrouridine(20) in tRNA + NADP(+) = uridine(20) in tRNA + NADPH + H(+). It carries out the reaction 5,6-dihydrouridine(20) in tRNA + NAD(+) = uridine(20) in tRNA + NADH + H(+). The catalysed reaction is 5,6-dihydrouridine(20a) in tRNA + NADP(+) = uridine(20a) in tRNA + NADPH + H(+). The enzyme catalyses 5,6-dihydrouridine(20a) in tRNA + NAD(+) = uridine(20a) in tRNA + NADH + H(+). Functionally, catalyzes the synthesis of 5,6-dihydrouridine (D), a modified base found in the D-loop of most tRNAs, via the reduction of the C5-C6 double bond in target uridines. Specifically modifies U20 and U20a in tRNAs. In Vibrio vulnificus (strain CMCP6), this protein is tRNA-dihydrouridine(20/20a) synthase.